Reading from the N-terminus, the 249-residue chain is Imidazole glycerol phosphate synthase subunit HisF (249 aa).

Active-site residues include aspartate 11 and aspartate 130.

The protein belongs to the HisA/HisF family. Heterodimer of HisH and HisF.

The protein resides in the cytoplasm. The enzyme catalyses 5-[(5-phospho-1-deoxy-D-ribulos-1-ylimino)methylamino]-1-(5-phospho-beta-D-ribosyl)imidazole-4-carboxamide + L-glutamine = D-erythro-1-(imidazol-4-yl)glycerol 3-phosphate + 5-amino-1-(5-phospho-beta-D-ribosyl)imidazole-4-carboxamide + L-glutamate + H(+). It participates in amino-acid biosynthesis; L-histidine biosynthesis; L-histidine from 5-phospho-alpha-D-ribose 1-diphosphate: step 5/9. IGPS catalyzes the conversion of PRFAR and glutamine to IGP, AICAR and glutamate. The HisF subunit catalyzes the cyclization activity that produces IGP and AICAR from PRFAR using the ammonia provided by the HisH subunit. The chain is Imidazole glycerol phosphate synthase subunit HisF from Exiguobacterium sibiricum (strain DSM 17290 / CCUG 55495 / CIP 109462 / JCM 13490 / 255-15).